A 449-amino-acid polypeptide reads, in one-letter code: MVSAISIVAIFALEGFVTTYSDGTKDLVFVQTLWRHGDRSPTKTFKTDPFQEDAWQFGGGGWGQLSPAGMKQHLNLGKMLRNRYVTNYNFLPNKYNAKQIYVRSTDVNRTIISAMSNLLGQYGQNDNSSTPGLDYPDVDGWPAGYVPIAVHTVDDDTDHLGNMESTCPFKDQVWELAKTSDEVKSFVNSADVQAVLGNLTNYCGQPVDIDNLWIITNALYIEQIYYNATLRTKNNWFTDAFYAKADAINDQVQLFQNGIFKTVPNIVNGHDVGVLTRKVRGGPILNDMVMHINLKLMCQGQTTPNCTWINNLKNYIYSAHDTTIYAFFSALLIEEYAVKPSGGYPLYSAAVLLELYIDSVDKKPYFKMVYHEQDGSGFKDVTMGIQGCPQNSSYCDLDILRNFANTIKPDQPIDQWCLTDLNKSSSFATVSMLFIAAILAINNNFLGLF.

The signal sequence occupies residues 1–19 (MVSAISIVAIFALEGFVTT). The Extracellular segment spans residues 20–428 (YSDGTKDLVF…TDLNKSSSFA (409 aa)). H36 acts as the Nucleophile in catalysis. The active-site Proton donor is the D321. A helical membrane pass occupies residues 429 to 449 (TVSMLFIAAILAINNNFLGLF).

Belongs to the histidine acid phosphatase family. In terms of assembly, homodimer. The N-terminus is blocked. In terms of tissue distribution, expressed in the intestine, specifically on the edge of the gut lumen, in the 14 posterior cells of the intestine.

The protein resides in the membrane. The catalysed reaction is a phosphate monoester + H2O = an alcohol + phosphate. Functionally, acid phosphatase required for normal growth and development. Specifically required for normal gut differentiation. The chain is Intestinal acid phosphatase from Caenorhabditis elegans.